The chain runs to 172 residues: C-phycocyanin beta chain (172 aa).

N72 is subject to N4-methylasparagine. (2R,3E)-phycocyanobilin contacts are provided by C82 and C153.

Belongs to the phycobiliprotein family. In terms of assembly, heterodimer of an alpha and a beta subunit, which further assembles into trimers and the trimers into hexamers. The basic functional unit of phycobiliproteins is a ring-shaped hexamer formed from two back-to-back trimers contacting via the alpha chain subunits. The trimers are composed of alpha/beta subunit heterodimers arranged around a three-fold axis of symmetry. The phycoerythrins also contain a gamma subunit which is located in the center of the hexamer. Post-translationally, contains two covalently linked bilin chromophores.

It is found in the plastid. Its subcellular location is the chloroplast thylakoid membrane. Its function is as follows. Light-harvesting photosynthetic bile pigment-protein from the phycobiliprotein complex (phycobilisome, PBS). Phycocyanin is the major phycobiliprotein in the PBS rod. The protein is C-phycocyanin beta chain (cpcB) of Rhodella violacea (Red alga).